A 205-amino-acid chain; its full sequence is Ras-related protein RABB1a (205 aa).

A GTP-binding site is contributed by 13–20 (GDTGVGKS). The Effector region motif lies at 35–43 (HDLTIGVEF). Residues 61–65 (DTAGQ), 119–122 (NKCD), and 149–150 (SA) each bind GTP. The disordered stretch occupies residues 179-205 (ANEPGITPGPFGGKDASSSQQRRGCCG). Over residues 194 to 205 (ASSSQQRRGCCG) the composition is skewed to polar residues. Residues Cys-203 and Cys-204 are each lipidated (S-geranylgeranyl cysteine).

The protein belongs to the small GTPase superfamily. Rab family.

It is found in the cell membrane. Its function is as follows. Intracellular vesicle trafficking and protein transport. This is Ras-related protein RABB1a (RABB1A) from Arabidopsis thaliana (Mouse-ear cress).